Consider the following 107-residue polypeptide: Phosphoribosyl-ATP pyrophosphatase (107 aa).

It belongs to the PRA-PH family.

It is found in the cytoplasm. It catalyses the reaction 1-(5-phospho-beta-D-ribosyl)-ATP + H2O = 1-(5-phospho-beta-D-ribosyl)-5'-AMP + diphosphate + H(+). The protein operates within amino-acid biosynthesis; L-histidine biosynthesis; L-histidine from 5-phospho-alpha-D-ribose 1-diphosphate: step 2/9. The protein is Phosphoribosyl-ATP pyrophosphatase of Azoarcus sp. (strain BH72).